The primary structure comprises 660 residues: DNA mismatch repair protein MutL (660 aa).

It belongs to the DNA mismatch repair MutL/HexB family.

This protein is involved in the repair of mismatches in DNA. It is required for dam-dependent methyl-directed DNA mismatch repair. May act as a 'molecular matchmaker', a protein that promotes the formation of a stable complex between two or more DNA-binding proteins in an ATP-dependent manner without itself being part of a final effector complex. The sequence is that of DNA mismatch repair protein MutL from Streptococcus equi subsp. zooepidemicus (strain MGCS10565).